A 2641-amino-acid polypeptide reads, in one-letter code: CCR4-NOT transcription complex subunit let-711 (2641 aa).

Positions 660–664 (LSELL) match the LXXLL motif. Disordered regions lie at residues 771–887 (SGRS…QNAQ), 936–963 (TQRQ…PQQQ), 1197–1221 (EGGR…PAAA), 1518–1565 (QSKI…SQGA), and 2034–2054 (GMNN…AGLQ). Composition is skewed to low complexity over residues 774 to 795 (SSSV…QQQQ), 802 to 839 (LPPS…SQQQ), and 853 to 877 (PAQF…HMMG). A compositionally biased stretch (pro residues) spans 951–960 (PQRPSGPPTP). Residues 1205 to 1221 (GSAQAGSASSTPTPAAA) are compositionally biased toward low complexity. The span at 2034–2046 (GMNNAMNNGAGNA) shows a compositional bias: low complexity. An LXXLL motif is present at residues 2341–2345 (LRVLL). Residues 2609–2641 (AQGSQPQAQPDGAPGPLGNNTGAANQQQNPNTN) are disordered.

This sequence belongs to the CNOT1 family. Component of the CCR4-NOT complex at least composed of ccf-1, ccr-4 and let-711, which is required for germ cell development in hermaphrodites. Within the complex interacts with ccf-1 and ccr-4; the interactions are direct. In terms of tissue distribution, highly expressed in the germline of hermaphrodites.

Its subcellular location is the nucleus. Functionally, scaffolding component of the CCR4-NOT complex which is one of the major cellular mRNA deadenylases and is linked to various cellular processes including bulk mRNA degradation, miRNA-mediated repression, translational repression during translational initiation and general transcription regulation. Positively regulates the accumulation of the CCR4-NOT complex component ccr-1. Within the complex promotes germ cell development and fertility in hermaphrodites. Additional complex functions may be a consequence of its influence on mRNA expression. Its scaffolding function implies its interaction with the catalytic complex module and diverse RNA-binding proteins mediating the complex recruitment to selected mRNA 3'UTRs. Mediates the recruitment of the CCR4-NOT complex to miRNA targets and to the RISC complex. Acts as a transcriptional repressor. Represses the ligand-dependent transcriptional activation by nuclear receptors. In embryos, plays a role in female pronucleus and mitotic spindle positioning during the first cleavage divisions after fertilization. This may partly be through negatively regulating the accumulation of zyg-9 at the centrosome. Negatively regulates the formation of long astral microtubules in developing embryos. Required for the stabilization and degradation of maternal mRNAs such as nos-2 in somatic blastomeres. The sequence is that of CCR4-NOT transcription complex subunit let-711 from Caenorhabditis elegans.